A 239-amino-acid chain; its full sequence is Ribosomal RNA large subunit methyltransferase E (239 aa).

Positions 88, 90, 111, 127, and 151 each coordinate S-adenosyl-L-methionine. The active-site Proton acceptor is the K191.

Belongs to the class I-like SAM-binding methyltransferase superfamily. RNA methyltransferase RlmE family.

The protein resides in the cytoplasm. It carries out the reaction uridine(2552) in 23S rRNA + S-adenosyl-L-methionine = 2'-O-methyluridine(2552) in 23S rRNA + S-adenosyl-L-homocysteine + H(+). Functionally, specifically methylates the uridine in position 2552 of 23S rRNA at the 2'-O position of the ribose in the fully assembled 50S ribosomal subunit. In Bartonella bacilliformis (strain ATCC 35685 / KC583 / Herrer 020/F12,63), this protein is Ribosomal RNA large subunit methyltransferase E.